The chain runs to 20 residues: Mu-conotoxin SIIIB (20 aa).

At Gln1 the chain carries Pyrrolidone carboxylic acid. Cystine bridges form between Cys3–Cys13, Cys4–Cys19, and Cys8–Cys20. Position 20 is a cysteine amide (Cys20).

In terms of tissue distribution, expressed by the venom duct.

The protein resides in the secreted. Mu-conotoxins block voltage-gated sodium channels (VGSC). Potently displaces (125)I-TIIIA from native rat brain Nav1.2/SCN2A (IC(50) is 5 nM) and muscle Nav1.4/SCN4A (IC(50) is 3 nM) VGSCs. Potently and irreversibly inhibits current through Xenopus oocyte-expressed Nav1.2/SCN2A and Nav1.4/SCN4A. The sequence is that of Mu-conotoxin SIIIB from Conus striatus (Striated cone).